The sequence spans 188 residues: NADH-quinone oxidoreductase subunit I (188 aa).

2 consecutive 4Fe-4S ferredoxin-type domains span residues 44–74 (LNRY…VEGA) and 90–119 (RVYQ…MTNE). Positions 54, 57, 60, 64, 99, 102, 105, and 109 each coordinate [4Fe-4S] cluster. The interval 144-188 (GMVDSPHPMAPGTTAEDYYRGTVTGGAAPASQDEPEADDTAGDRP) is disordered. Residues 176–188 (DEPEADDTAGDRP) are compositionally biased toward acidic residues.

The protein belongs to the complex I 23 kDa subunit family. As to quaternary structure, NDH-1 is composed of 14 different subunits. Subunits NuoA, H, J, K, L, M, N constitute the membrane sector of the complex. Requires [4Fe-4S] cluster as cofactor.

It localises to the cell membrane. The enzyme catalyses a quinone + NADH + 5 H(+)(in) = a quinol + NAD(+) + 4 H(+)(out). In terms of biological role, NDH-1 shuttles electrons from NADH, via FMN and iron-sulfur (Fe-S) centers, to quinones in the respiratory chain. The immediate electron acceptor for the enzyme in this species is believed to be ubiquinone. Couples the redox reaction to proton translocation (for every two electrons transferred, four hydrogen ions are translocated across the cytoplasmic membrane), and thus conserves the redox energy in a proton gradient. This chain is NADH-quinone oxidoreductase subunit I, found in Rhodococcus opacus (strain B4).